A 4128-amino-acid polypeptide reads, in one-letter code: MAGSGAGVRCSLLRLQETLSAADRCGAALAGHQLIRGLGQECVLSSSPAVLALQTSLVFSRDFGLLVFVRKSLNSIEFRECREEILKFLCIFLEKMGQKIAPYSVEIKNTCTSVYTKDRAAKCKIPALDLLIKLLQTFRSSRLMDEFKIGELFSKFYGELALKKKIPDTVLEKVYELLGLLGEVHPSEMINNAENLFRAFLGELKTQMTSAVREPKLPVLAGCLKGLSSLLCNFTKSMEEDPQTSREIFNFVLKAIRPQIDLKRYAVPSAGLRLFALHASQFSTCLLDNYVSLFEVLLKWCAHTNVELKKAALSALESFLKQVSNMVAKNAEMHKNKLQYFMEQFYGIIRNVDSNNKELSIAIRGYGLFAGPCKVINAKDVDFMYVELIQRCKQMFLTQTDTGDDRVYQMPSFLQSVASVLLYLDTVPEVYTPVLEHLVVMQIDSFPQYSPKMQLVCCRAIVKVFLALAAKGPVLRNCISTVVHQGLIRICSKPVVLPKGPESESEDHRASGEVRTGKWKVPTYKDYVDLFRHLLSSDQMMDSILADEAFFSVNSSSESLNHLLYDEFVKSVLKIVEKLDLTLEIQTVGEQENGDEAPGVWMIPTSDPAANLHPAKPKDFSAFINLVEFCREILPEKQAEFFEPWVYSFSYELILQSTRLPLISGFYKLLSITVRNAKKIKYFEGVSPKSLKHSPEDPEKYSCFALFVKFGKEVAVKMKQYKDELLASCLTFLLSLPHNIIELDVRAYVPALQMAFKLGLSYTPLAEVGLNALEEWSIYIDRHVMQPYYKDILPCLDGYLKTSALSDETKNNWEVSALSRAAQKGFNKVVLKHLKKTKNLSSNEAISLEEIRIRVVQMLGSLGGQINKNLLTVTSSDEMMKSYVAWDREKRLSFAVPFREMKPVIFLDVFLPRVTELALTASDRQTKVAACELLHSMVMFMLGKATQMPEGGQGAPPMYQLYKRTFPVLLRLACDVDQVTRQLYEPLVMQLIHWFTNNKKFESQDTVALLEAILDGIVDPVDSTLRDFCGRCIREFLKWSIKQITPQQQEKSPVNTKSLFKRLYSLALHPNAFKRLGASLAFNNIYREFREEESLVEQFVFEALVIYMESLALAHADEKSLGTIQQCCDAIDHLCRIIEKKHVSLNKAKKRRLPRGFPPSASLCLLDLVKWLLAHCGRPQTECRHKSIELFYKFVPLLPGNRSPNLWLKDVLKEEGVSFLINTFEGGGCGQPSGILAQPTLLYLRGPFSLQATLCWLDLLLAALECYNTFIGERTVGALQVLGTEAQSSLLKAVAFFLESIAMHDIIAAEKCFGTGAAGNRTSPQEGERYNYSKCTVVVRIMEFTTTLLNTSPEGWKLLKKDLCNTHLMRVLVQTLCEPASIGFNIGDVQVMAHLPDVCVNLMKALKMSPYKDILETHLREKITAQSIEELCAVNLYGPDAQVDRSRLAAVVSACKQLHRAGLLHNILPSQSTDLHHSVGTELLSLVYKGIAPGDERQCLPSLDLSCKQLASGLLELAFAFGGLCERLVSLLLNPAVLSTASLGSSQGSVIHFSHGEYFYSLFSETINTELLKNLDLAVLELMQSSVDNTKMVSAVLNGMLDQSFRERANQKHQGLKLATTILQHWKKCDSWWAKDSPLETKMAVLALLAKILQIDSSVSFNTSHGSFPEVFTTYISLLADTKLDLHLKGQAVTLLPFFTSLTGGSLEELRRVLEQLIVAHFPMQSREFPPGTPRFNNYVDCMKKFLDALELSQSPMLLELMTEVLCREQQHVMEELFQSSFRRIARRGSCVTQVGLLESVYEMFRKDDPRLSFTRQSFVDRSLLTLLWHCSLDALREFFSTIVVDAIDVLKSRFTKLNESTFDTQITKKMGYYKILDVMYSRLPKDDVHAKESKINQVFHGSCITEGNELTKTLIKLCYDAFTENMAGENQLLERRRLYHCAAYNCAISVICCVFNELKFYQGFLFSEKPEKNLLIFENLIDLKRRYNFPVEVEVPMERKKKYIEIRKEAREAANGDSDGPSYMSSLSYLADSTLSEEMSQFDFSTGVQSYSYSSQDPRPATGRFRRREQRDPTVHDDVLELEMDELNRHECMAPLTALVKHMHRSLGPPQGEEDSVPRDLPSWMKFLHGKLGNPIVPLNIRLFLAKLVINTEEVFRPYAKHWLSPLLQLAASENNGGEGIHYMVVEIVATILSWTGLATPTGVPKDEVLANRLLNFLMKHVFHPKRAVFRHNLEIIKTLVECWKDCLSIPYRLIFEKFSGKDPNSKDNSVGIQLLGIVMANDLPPYDPQCGIQSSEYFQALVNNMSFVRYKEVYAAAAEVLGLILRYVMERKNILEESLCELVAKQLKQHQNTMEDKFIVCLNKVTKSFPPLADRFMNAVFFLLPKFHGVLKTLCLEVVLCRVEGMTELYFQLKSKDFVQVMRHRDDERQKVCLDIIYKMMPKLKPVELRELLNPVVEFVSHPSTTCREQMYNILMWIHDNYRDPESETDNDSQEIFKLAKDVLIQGLIDENPGLQLIIRNFWSHETRLPSNTLDRLLALNSLYSPKIEVHFLSLATNFLLEMTSMSPDYPNPMFEHPLSECEFQEYTIDSDWRFRSTVLTPMFVETQASQGTLQTRTQEGSLSARWPVAGQIRATQQQHDFTLTQTADGRSSFDWLTGSSTDPLVDHTSPSSDSLLFAHKRSERLQRAPLKSVGPDFGKKRLGLPGDEVDNKVKGAAGRTDLLRLRRRFMRDQEKLSLMYARKGVAEQKREKEIKSELKMKQDAQVVLYRSYRHGDLPDIQIKHSSLITPLQAVAQRDPIIAKQLFSSLFSGILKEMDKFKTLSEKNNITQKLLQDFNRFLNTTFSFFPPFVSCIQDISCQHAALLSLDPAAVSAGCLASLQQPVGIRLLEEALLRLLPAELPAKRVRGKARLPPDVLRWVELAKLYRSIGEYDVLRGIFTSEIGTKQITQSALLAEARSDYSEAAKQYDEALNKQDWVDGEPTEAEKDFWELASLDCYNHLAEWKSLEYCSTASIDSENPPDLNKIWSEPFYQETYLPYMIRSKLKLLLQGEADQSLLTFIDKAMHGELQKAILELHYSQELSLLYLLQDDVDRAKYYIQNGIQSFMQNYSSIDVLLHQSRLTKLQSVQALTEIQEFISFISKQGNLSSQVPLKRLLNTWTNRYPDAKMDPMNIWDDIITNRCFFLSKIEEKLTPLPEDNSMNVDQDGDPSDRMEVQEQEEDISSLIRSCKFSMKMKMIDSARKQNNFSLAMKLLKELHKESKTRDDWLVSWVQSYCRLSHCRSRSQGCSEQVLTVLKTVSLLDENNVSSYLSKNILAFRDQNILLGTTYRIIANALSSEPACLAEIEEDKARRILELSGSSSEDSEKVIAGLYQRAFQHLSEAVQAAEEEAQPPSWSCGPAAGVIDAYMTLADFCDQQLRKEEENASVIDSAELQAYPALVVEKMLKALKLNSNEARLKFPRLLQIIERYPEETLSLMTKEISSVPCWQFISWISHMVALLDKDQAVAVQHSVEEITDNYPQAIVYPFIISSESYSFKDTSTGHKNKEFVARIKSKLDQGGVIQDFINALDQLSNPELLFKDWSNDVRAELAKTPVNKKNIEKMYERMYAALGDPKAPGLGAFRRKFIQTFGKEFDKHFGKGGSKLLRMKLSDFNDITNMLLLKMNKDSKPPGNLKECSPWMSDFKVEFLRNELEIPGQYDGRGKPLPEYHVRIAGFDERVTVMASLRRPKRIIIRGHDEREHPFLVKGGEDLRQDQRVEQLFQVMNGILAQDSACSQRALQLRTYSVVPMTSRLGLIEWLENTVTLKDLLLNTMSQEEKAAYLSDPRAPPCEYKDWLTKMSGKHDVGAYMLMYKGANRTETVTSFRKRESKVPADLLKRAFVRMSTSPEAFLALRSHFASSHALICISHWILGIGDRHLNNFMVAMETGGVIGIDFGHAFGSATQFLPVPELMPFRLTRQFINLMLPMKETGLMYSIMVHALRAFRSDPGLLTNTMDVFVKEPSFDWKNFEQKMLKKGGSWIQEINVAEKNWYPRQKICYAKRKLAGANPAVITCDELLLGHEKAPAFRDYVAVARGSKDHNIRAQEPESGLSEETQVKCLMDQATDPNILGRTWEGWEPWM.

Residue Lys117 is modified to N6-acetyllysine. One copy of the HEAT 1 repeat lies at 288–323 (DNYVSLFEVLLKWCAHTNVELKKAALSALESFLKQV). Ser511 and Ser687 each carry phosphoserine. N6-acetyllysine is present on Lys828. Residues Ser841 and Ser893 each carry the phosphoserine modification. Residues 1004–1040 (QDTVALLEAILDGIVDPVDSTLRDFCGRCIREFLKWS) form an HEAT 2 repeat. Ser1065 is subject to Phosphoserine. N6-acetyllysine is present on Lys1209. The interaction with C1D stretch occupies residues 1503-1538 (LDLSCKQLASGLLELAFAFGGLCERLVSLLLNPAVL). The leucine-zipper stretch occupies residues 1503 to 1538 (LDLSCKQLASGLLELAFAFGGLCERLVSLLLNPAVL). The TPR 1 repeat unit spans residues 1723–1756 (PMQSREFPPGTPRFNNYVDCMKKFLDALELSQSP). An N6-acetyllysine modification is found at Lys1970. Residues 2050–2073 (QSYSYSSQDPRPATGRFRRREQRD) form a disordered region. Position 2056 is a phosphoserine; by autocatalysis (Ser2056). Lys2259 carries the N6-acetyllysine modification. Residues 2436-3212 (LDIIYKMMPK…DNSMNVDQDG (777 aa)) form a KIP-binding region. Residue Thr2535 is modified to Phosphothreonine. Thr2609 is modified (phosphothreonine; by autocatalysis). At Ser2612 the chain carries Phosphoserine; by autocatalysis. Residues Thr2638 and Thr2647 each carry the phosphothreonine; by autocatalysis modification. Residues 2737–2765 (EKLSLMYARKGVAEQKREKEIKSELKMKQ) form a may split the end of the DNA molecule, with the two strands separating around the region region. At Ser2789 the chain carries Phosphoserine. An FAT domain is found at 2906–3539 (PAKRVRGKAR…VYPFIISSES (634 aa)). TPR repeat units lie at residues 2920–2948 (VLRW…SEIG) and 2949–2982 (TKQI…QDWV). The disordered stretch occupies residues 3200-3222 (LPEDNSMNVDQDGDPSDRMEVQE). Ser3205 bears the Phosphoserine mark. N6-acetyllysine is present on residues Lys3241, Lys3260, Lys3621, Lys3638, and Lys3642. The PI3K/PI4K catalytic domain occupies 3722–4053 (FDERVTVMAS…ICYAKRKLAG (332 aa)). The tract at residues 3728 to 3734 (VMASLRR) is G-loop. Phosphoserine occurs at positions 3731 and 3821. Residues 3919 to 3927 (GIGDRHLNN) form a catalytic loop region. The activation loop stretch occupies residues 3939–3964 (GIDFGHAFGSATQFLPVPELMPFRLT). A Phosphoserine modification is found at Ser4026. In terms of domain architecture, FATC spans 4096-4128 (SGLSEETQVKCLMDQATDPNILGRTWEGWEPWM).

This sequence belongs to the PI3/PI4-kinase family. In terms of assembly, DNA-PK is a heterotrimer of PRKDC and the Ku dimer (composed of XRCC6/Ku70 and XRCC5/Ku86). Formation of this complex may be promoted by interaction with ILF3. Component of the core long-range non-homologous end joining (NHEJ) complex (also named DNA-PK complex) composed of PRKDC, LIG4, XRCC4, XRCC6/Ku70, XRCC5/Ku86 and NHEJ1/XLF. Additional component of the NHEJ complex includes PAXX. Following autophosphorylation, PRKDC dissociates from DNA. Interacts with DNA-PKcs-interacting protein (KIP) with the region upstream the kinase domain. PRKDC alone also interacts with and phosphorylates DCLRE1C, thereby activating the latent endonuclease activity of this protein. Interacts with C1D. Interacts with TTI1 and TELO2. Interacts with CIB1. Interacts with SETX. Interacts with NR4A3; the DNA-dependent protein kinase complex DNA-PK phosphorylates and activates NR4A3 and prevents NR4A3 ubiquitination and degradation. Interacts with BRAT1. Part of the HDP-RNP complex composed of at least HEXIM1, PRKDC, XRCC5, XRCC6, paraspeckle proteins (SFPQ, NONO, PSPC1, RBM14, and MATR3) and NEAT1 RNA. Interacts with KAT5. In terms of processing, autophosphorylated at two clusters, the T2609 cluster and the S2056 cluster. Autophosphorylated on Ser-2056, Thr-2609, Thr-2638 and Thr-2647. Ser-2056 and Thr-2609 are DNA damage-inducible phosphorylation sites (inducible with ionizing radiation, IR) dephosphorylated by PPP5C. Autophosphorylation induces a conformational change that leads to remodeling of the DNA-PK complex, requisite for efficient end processing and DNA repair. Autophosphorylation in trans within DNA-PK complexes loaded on DNA ends leads to the dissociation of PRKDC from DNA and the transition into the short-range NHEJ complex. Autophosphorylation of the T2609 cluster is required for hematopoietic development and protein synthesis in erythrocytes precursors. S-nitrosylated by GAPDH. Post-translationally, polyubiquitinated by RNF144A, leading to proteasomal degradation.

The protein localises to the nucleus. It is found in the nucleolus. The protein resides in the cytoplasm. It localises to the cytosol. It catalyses the reaction L-seryl-[protein] + ATP = O-phospho-L-seryl-[protein] + ADP + H(+). It carries out the reaction L-threonyl-[protein] + ATP = O-phospho-L-threonyl-[protein] + ADP + H(+). Activity seems to be attenuated by autophosphorylation. Binding to the SL1 region of U3 small nucleolar RNA promotes auto-phosphorylation activity. Inhibited by wortmannin. In terms of biological role, serine/threonine-protein kinase that acts as a molecular sensor for DNA damage. Involved in DNA non-homologous end joining (NHEJ) required for double-strand break (DSB) repair and V(D)J recombination. Must be bound to DNA to express its catalytic properties. Promotes processing of hairpin DNA structures in V(D)J recombination by activation of the hairpin endonuclease artemis (DCLRE1C). Recruited by XRCC5 and XRCC6 to DNA ends and is required to (1) protect and align broken ends of DNA, thereby preventing their degradation, (2) and sequester the DSB for repair by NHEJ. Acts as a scaffold protein to aid the localization of DNA repair proteins to the site of damage. The assembly of the DNA-PK complex at DNA ends is also required for the NHEJ ligation step. Found at the ends of chromosomes, suggesting a further role in the maintenance of telomeric stability and the prevention of chromosomal end fusion. Also involved in modulation of transcription. As part of the DNA-PK complex, involved in the early steps of ribosome assembly by promoting the processing of precursor rRNA into mature 18S rRNA in the small-subunit processome. Binding to U3 small nucleolar RNA, recruits PRKDC and XRCC5/Ku86 to the small-subunit processome. Recognizes the substrate consensus sequence [ST]-Q. Phosphorylates 'Ser-139' of histone variant H2AX, thereby regulating DNA damage response mechanism. Phosphorylates ASF1A, DCLRE1C, c-Abl/ABL1, histone H1, HSPCA, c-jun/JUN, p53/TP53, PARP1, POU2F1, DHX9, FH, SRF, NHEJ1/XLF, XRCC1, XRCC4, XRCC5, XRCC6, WRN, MYC and RFA2. Can phosphorylate C1D not only in the presence of linear DNA but also in the presence of supercoiled DNA. Ability to phosphorylate p53/TP53 in the presence of supercoiled DNA is dependent on C1D. Acts as a regulator of the phosphatidylinositol 3-kinase/protein kinase B signal transduction by mediating phosphorylation of 'Ser-473' of protein kinase B (PKB/AKT1, PKB/AKT2, PKB/AKT3), promoting their activation. Contributes to the determination of the circadian period length by antagonizing phosphorylation of CRY1 'Ser-588' and increasing CRY1 protein stability, most likely through an indirect mechanism. Plays a role in the regulation of DNA virus-mediated innate immune response by assembling into the HDP-RNP complex, a complex that serves as a platform for IRF3 phosphorylation and subsequent innate immune response activation through the cGAS-STING pathway. Also regulates the cGAS-STING pathway by catalyzing phosphorylation of CGAS, thereby impairing CGAS oligomerization and activation. Also regulates the cGAS-STING pathway by mediating phosphorylation of PARP1. The polypeptide is DNA-dependent protein kinase catalytic subunit (PRKDC) (Homo sapiens (Human)).